The chain runs to 187 residues: Ribosome-recycling factor (187 aa).

It belongs to the RRF family.

Its subcellular location is the cytoplasm. Functionally, responsible for the release of ribosomes from messenger RNA at the termination of protein biosynthesis. May increase the efficiency of translation by recycling ribosomes from one round of translation to another. This Ruegeria pomeroyi (strain ATCC 700808 / DSM 15171 / DSS-3) (Silicibacter pomeroyi) protein is Ribosome-recycling factor.